A 538-amino-acid chain; its full sequence is Putative cysteine ligase BshC (538 aa).

The stretch at 460–485 (KINEQIELLERMLKRNIEKKHEVELN) forms a coiled coil.

Belongs to the BshC family.

Functionally, involved in bacillithiol (BSH) biosynthesis. May catalyze the last step of the pathway, the addition of cysteine to glucosamine malate (GlcN-Mal) to generate BSH. This is Putative cysteine ligase BshC from Bacillus cereus (strain Q1).